The following is a 363-amino-acid chain: DNA replication and repair protein RecF (363 aa).

Position 30–37 (30–37 (GPNGSGKT)) interacts with ATP.

It belongs to the RecF family.

The protein resides in the cytoplasm. Its function is as follows. The RecF protein is involved in DNA metabolism; it is required for DNA replication and normal SOS inducibility. RecF binds preferentially to single-stranded, linear DNA. It also seems to bind ATP. The protein is DNA replication and repair protein RecF of Chlorobium phaeobacteroides (strain BS1).